Consider the following 476-residue polypeptide: Bifunctional protein HldE (476 aa).

A ribokinase region spans residues Met-1–Ser-319. Residue Asn-195–Glu-198 coordinates ATP. Asp-264 is a catalytic residue. Residues Met-345–Gln-476 form a cytidylyltransferase region.

It in the N-terminal section; belongs to the carbohydrate kinase PfkB family. In the C-terminal section; belongs to the cytidylyltransferase family. Homodimer.

The enzyme catalyses D-glycero-beta-D-manno-heptose 7-phosphate + ATP = D-glycero-beta-D-manno-heptose 1,7-bisphosphate + ADP + H(+). The catalysed reaction is D-glycero-beta-D-manno-heptose 1-phosphate + ATP + H(+) = ADP-D-glycero-beta-D-manno-heptose + diphosphate. The protein operates within nucleotide-sugar biosynthesis; ADP-L-glycero-beta-D-manno-heptose biosynthesis; ADP-L-glycero-beta-D-manno-heptose from D-glycero-beta-D-manno-heptose 7-phosphate: step 1/4. Its pathway is nucleotide-sugar biosynthesis; ADP-L-glycero-beta-D-manno-heptose biosynthesis; ADP-L-glycero-beta-D-manno-heptose from D-glycero-beta-D-manno-heptose 7-phosphate: step 3/4. Catalyzes the phosphorylation of D-glycero-D-manno-heptose 7-phosphate at the C-1 position to selectively form D-glycero-beta-D-manno-heptose-1,7-bisphosphate. Functionally, catalyzes the ADP transfer from ATP to D-glycero-beta-D-manno-heptose 1-phosphate, yielding ADP-D-glycero-beta-D-manno-heptose. This is Bifunctional protein HldE from Shewanella sp. (strain ANA-3).